The sequence spans 338 residues: UDP-glucose 4-epimerase (338 aa).

Residues 11–12 (YI), 31–36 (DNLCNS), 58–59 (DI), 80–84 (FAGLK), asparagine 99, serine 124, tyrosine 149, lysine 153, and phenylalanine 178 contribute to the NAD(+) site. Serine 124 and tyrosine 149 together coordinate substrate. The active-site Proton acceptor is the tyrosine 149. Residues asparagine 179, 199–200 (NL), 216–218 (AIF), arginine 231, 292–295 (REGD), and tyrosine 299 contribute to the substrate site.

Belongs to the NAD(P)-dependent epimerase/dehydratase family. Homodimer. Requires NAD(+) as cofactor.

The catalysed reaction is UDP-alpha-D-glucose = UDP-alpha-D-galactose. It functions in the pathway carbohydrate metabolism; galactose metabolism. Its activity is regulated as follows. Inhibited by UDP-phenol and NaBH3CN. Functionally, involved in the metabolism of galactose. Catalyzes the conversion of UDP-galactose (UDP-Gal) to UDP-glucose (UDP-Glc) through a mechanism involving the transient reduction of NAD. It is only active on UDP-galactose and UDP-glucose. The polypeptide is UDP-glucose 4-epimerase (galE) (Escherichia coli (strain K12)).